The following is a 79-amino-acid chain: Conotoxin VnMEKL-024 (79 aa).

The N-terminal stretch at 1-19 is a signal peptide; the sequence is MQKLTILLLVAAVLMSTQA. A propeptide spanning residues 20–50 is cleaved from the precursor; the sequence is LIRGGVEKRQEAKRNFFSKRKTTAESWWEGE. Cystine bridges form between Cys-51/Cys-65, Cys-58/Cys-69, and Cys-64/Cys-76.

It belongs to the conotoxin O2 superfamily. Expressed by the venom duct.

It localises to the secreted. This Conus ventricosus (Mediterranean cone) protein is Conotoxin VnMEKL-024.